The sequence spans 278 residues: Bifunctional protein FolD (278 aa).

NADP(+) is bound by residues 165 to 167 and S190; that span reads GRS.

The protein belongs to the tetrahydrofolate dehydrogenase/cyclohydrolase family. As to quaternary structure, homodimer.

The enzyme catalyses (6R)-5,10-methylene-5,6,7,8-tetrahydrofolate + NADP(+) = (6R)-5,10-methenyltetrahydrofolate + NADPH. It carries out the reaction (6R)-5,10-methenyltetrahydrofolate + H2O = (6R)-10-formyltetrahydrofolate + H(+). It participates in one-carbon metabolism; tetrahydrofolate interconversion. Functionally, catalyzes the oxidation of 5,10-methylenetetrahydrofolate to 5,10-methenyltetrahydrofolate and then the hydrolysis of 5,10-methenyltetrahydrofolate to 10-formyltetrahydrofolate. The chain is Bifunctional protein FolD from Clostridium tetani (strain Massachusetts / E88).